The primary structure comprises 116 residues: U30-theraphotoxin-Cg1b (116 aa).

The N-terminal stretch at methionine 1 to serine 17 is a signal peptide. Residues leucine 18 to arginine 53 constitute a propeptide that is removed on maturation. The tract at residues alanine 25–glutamate 45 is disordered. Cystine bridges form between cysteine 55–cysteine 69, cysteine 62–cysteine 75, cysteine 66–cysteine 112, and cysteine 68–cysteine 88.

The protein belongs to the neurotoxin 03 (Tx2) family. 02 subfamily. As to expression, expressed by the venom gland.

The protein localises to the secreted. Probable ion channel inhibitor. This is U30-theraphotoxin-Cg1b from Chilobrachys guangxiensis (Chinese earth tiger tarantula).